The primary structure comprises 406 residues: CCA-adding enzyme (406 aa).

ATP contacts are provided by G32 and R35. 2 residues coordinate CTP: G32 and R35. Residues D45 and D47 each contribute to the Mg(2+) site. ATP contacts are provided by R116, D159, R162, R165, and R168. The CTP site is built by R116, D159, R162, R165, and R168.

This sequence belongs to the tRNA nucleotidyltransferase/poly(A) polymerase family. Bacterial CCA-adding enzyme type 3 subfamily. Homodimer. It depends on Mg(2+) as a cofactor.

The enzyme catalyses a tRNA precursor + 2 CTP + ATP = a tRNA with a 3' CCA end + 3 diphosphate. It carries out the reaction a tRNA with a 3' CCA end + 2 CTP + ATP = a tRNA with a 3' CCACCA end + 3 diphosphate. Its function is as follows. Catalyzes the addition and repair of the essential 3'-terminal CCA sequence in tRNAs without using a nucleic acid template. Adds these three nucleotides in the order of C, C, and A to the tRNA nucleotide-73, using CTP and ATP as substrates and producing inorganic pyrophosphate. tRNA 3'-terminal CCA addition is required both for tRNA processing and repair. Also involved in tRNA surveillance by mediating tandem CCA addition to generate a CCACCA at the 3' terminus of unstable tRNAs. While stable tRNAs receive only 3'-terminal CCA, unstable tRNAs are marked with CCACCA and rapidly degraded. The sequence is that of CCA-adding enzyme from Enterococcus faecalis (strain ATCC 700802 / V583).